The chain runs to 261 residues: U1 small nuclear ribonucleoprotein 70 kDa homolog (261 aa).

Residues 100–178 (KTMFLSRLSY…RRIVVDVERG (79 aa)) enclose the RRM domain. Residues 192-261 (GLGGRHYTKE…DSSPKRRRYN (70 aa)) are disordered. Positions 198 to 215 (YTKERPRRERGSRFRGDS) are enriched in basic and acidic residues. The span at 216-235 (GFRGGYRGGFRKSSGGGSRF) shows a compositional bias: gly residues.

In terms of assembly, component of the spliceosome, where it is associated with snRNP U1. Associates with U1 snRNA.

Its subcellular location is the nucleus. Functionally, involved in nuclear mRNA splicing. Essential for growth. This chain is U1 small nuclear ribonucleoprotein 70 kDa homolog, found in Schizosaccharomyces pombe (strain 972 / ATCC 24843) (Fission yeast).